The chain runs to 696 residues: Caprolactamase subunit alpha (696 aa).

This sequence belongs to the HyuA family. As to quaternary structure, the caprolactamase is a heterotetramer composed of two alpha subunits (CapA) and two beta subunits (CapB).

With respect to regulation, activity is dependent on the presence of ATP and bicarbonate. The requirement for bicarbonate may be related to allosteric activation through conformational effects, but it is also conceivable that carboxyphosphate is formed and acts as a mediator in caprolactam activation, forming carboxy- or phospholactim. Functionally, component of a caprolactamase involved in the degradation of caprolactam, an industrial compound mainly used in the production of Nylon 6. Catalyzes the ATP-dependent hydrolysis of the caprolactam ring to form 6-aminocaproic acid (6-ACA). The alpha subunit is responsible for ATP-dependent substrate phosphorylation. The enzyme cannot use 5-oxoproline. This Pseudomonas jessenii protein is Caprolactamase subunit alpha.